Consider the following 201-residue polypeptide: 3-isopropylmalate dehydratase small subunit (201 aa).

The protein belongs to the LeuD family. LeuD type 1 subfamily. Heterodimer of LeuC and LeuD.

The catalysed reaction is (2R,3S)-3-isopropylmalate = (2S)-2-isopropylmalate. It functions in the pathway amino-acid biosynthesis; L-leucine biosynthesis; L-leucine from 3-methyl-2-oxobutanoate: step 2/4. In terms of biological role, catalyzes the isomerization between 2-isopropylmalate and 3-isopropylmalate, via the formation of 2-isopropylmaleate. This Brucella abortus (strain S19) protein is 3-isopropylmalate dehydratase small subunit.